We begin with the raw amino-acid sequence, 370 residues long: Doublesex- and mab-3-related transcription factor C2 (370 aa).

The disordered stretch occupies residues 1 to 38 (MDPSETAALHHCSADSSPADEARVPQSTELIPRRPVSR). The segment at residues 42-89 (CARCRNHGVTAHLKGHKRLCLFQACECHKCVLILERRRVMAAQVALRR) is a DNA-binding region (DM). The segment at 334-356 (APPGGRGFQPVGPPLRPSPGSSV) is disordered.

The protein belongs to the DMRT family. Expressed in testis. Highly expressed in ovary.

It is found in the nucleus. May be involved in sexual development. This is Doublesex- and mab-3-related transcription factor C2 (Dmrtc2) from Mus musculus (Mouse).